A 313-amino-acid polypeptide reads, in one-letter code: Peroxidase 57 (313 aa).

Positions 1-22 (MMKGAKFSSLLVLFFIFPIAFA) are cleaved as a signal peptide. Disulfide bonds link Cys-33-Cys-109, Cys-66-Cys-71, Cys-115-Cys-309, and Cys-192-Cys-224. The active-site Proton acceptor is the His-64. Ca(2+)-binding residues include Asp-65, Val-68, Gly-70, Asp-72, and Ser-74. Residue Pro-155 participates in substrate binding. His-185 is a heme b binding site. Thr-186 provides a ligand contact to Ca(2+). 3 residues coordinate Ca(2+): Asp-233, Ser-236, and Asp-241.

It belongs to the peroxidase family. Classical plant (class III) peroxidase subfamily. Requires heme b as cofactor. The cofactor is Ca(2+). As to expression, mainly expressed in roots.

It localises to the secreted. It carries out the reaction 2 a phenolic donor + H2O2 = 2 a phenolic radical donor + 2 H2O. Removal of H(2)O(2), oxidation of toxic reductants, biosynthesis and degradation of lignin, suberization, auxin catabolism, response to environmental stresses such as wounding, pathogen attack and oxidative stress. These functions might be dependent on each isozyme/isoform in each plant tissue. The sequence is that of Peroxidase 57 (PER57) from Arabidopsis thaliana (Mouse-ear cress).